We begin with the raw amino-acid sequence, 51 residues long: MAQTFQEKQQSRRIKMSTGNFFSRMWNAVVFGFGAAIGASVANAALGACCG.

Residues 20–42 (NFFSRMWNAVVFGFGAAIGASVA) traverse the membrane as a helical segment.

It is found in the membrane. This is an uncharacterized protein from Schizosaccharomyces pombe (strain 972 / ATCC 24843) (Fission yeast).